We begin with the raw amino-acid sequence, 383 residues long: MTATLALTEDLIRRRSVTPADEGCQAILETRLKALGFDCEALVSGPDDFRVTNLWAVRRGTQGKDGKLLVFAGHTDVVPTGPLEQWHSDPFAPTHRDGKLYGRGAADMKTSIAGFVVAVEEFVKAHPAHAGSIAFLITSDEEGPAHDGTIKVVEALSARGERLDYCVIGEPTSVDTLGDMVKNGRRGSLSGKLTVKGIQCHIAYPHLGRNPIHEAAPALAELAAEVWDQGNEYFPPTSWQMSNIHGGTGATNVIPGHVTIDFNFRFSTASTPEGLKARVHAILDRHQLEYALDWTLGGEPFLTPRGELSDALSSAIEAETGVKTELSTTGGTSDGRFIAKICPQVIEFGPPNASIHKIDEHVEVRFIEPLKNVYRGVLERLVA.

Position 74 (His-74) interacts with Zn(2+). Asp-76 is a catalytic residue. Asp-107 serves as a coordination point for Zn(2+). Glu-141 (proton acceptor) is an active-site residue. Residues Glu-142, Glu-170, and His-356 each contribute to the Zn(2+) site.

Belongs to the peptidase M20A family. DapE subfamily. In terms of assembly, homodimer. It depends on Zn(2+) as a cofactor. Requires Co(2+) as cofactor.

It carries out the reaction N-succinyl-(2S,6S)-2,6-diaminopimelate + H2O = (2S,6S)-2,6-diaminopimelate + succinate. It functions in the pathway amino-acid biosynthesis; L-lysine biosynthesis via DAP pathway; LL-2,6-diaminopimelate from (S)-tetrahydrodipicolinate (succinylase route): step 3/3. Its function is as follows. Catalyzes the hydrolysis of N-succinyl-L,L-diaminopimelic acid (SDAP), forming succinate and LL-2,6-diaminopimelate (DAP), an intermediate involved in the bacterial biosynthesis of lysine and meso-diaminopimelic acid, an essential component of bacterial cell walls. The protein is Succinyl-diaminopimelate desuccinylase of Cupriavidus necator (strain ATCC 17699 / DSM 428 / KCTC 22496 / NCIMB 10442 / H16 / Stanier 337) (Ralstonia eutropha).